The sequence spans 201 residues: Endoribonuclease YbeY (201 aa).

Zn(2+)-binding residues include H156, H160, and H166.

This sequence belongs to the endoribonuclease YbeY family. It depends on Zn(2+) as a cofactor.

Its subcellular location is the cytoplasm. In terms of biological role, single strand-specific metallo-endoribonuclease involved in late-stage 70S ribosome quality control and in maturation of the 3' terminus of the 16S rRNA. The chain is Endoribonuclease YbeY from Cupriavidus pinatubonensis (strain JMP 134 / LMG 1197) (Cupriavidus necator (strain JMP 134)).